The primary structure comprises 68 residues: P21 prophage-derived head-stabilizing protein (68 aa).

Belongs to the lambda phage gpW family.

The protein is P21 prophage-derived head-stabilizing protein of Escherichia coli O6:H1 (strain CFT073 / ATCC 700928 / UPEC).